The primary structure comprises 221 residues: Histone H1-like protein HC2 (221 aa).

2 stretches are compositionally biased toward basic residues: residues methionine 1–alanine 50 and proline 59–proline 70. The disordered stretch occupies residues methionine 1 to proline 70.

This sequence belongs to the histone H1/H5 family. HCT subfamily.

Its function is as follows. Might have a role in establishing the nucleoid structure of elementary bodies. The sequence is that of Histone H1-like protein HC2 (hctB) from Chlamydia trachomatis serovar L2 (strain ATCC VR-902B / DSM 19102 / 434/Bu).